The sequence spans 250 residues: Cobalt transport protein CbiM (250 aa).

An N-terminal signal peptide occupies residues 1–27 (MKKPLFFIASACVTIYILFALSPSVYA). 6 helical membrane-spanning segments follow: residues 33-53 (GFLPWQWALVWWLLFLPFFLV), 70-90 (LLLALATAFTFVLSALKIPSV), 102-122 (LGALLFGPFVMTVIGTAVLLF), 134-154 (TLGANAFSMAVVGPLVAYVLF), 168-188 (VFLAAMMADLATYVMTSIQLA), and 208-228 (IFAVTQIPLAITEGLLTVVVW).

It belongs to the CbiM family. In terms of assembly, forms an energy-coupling factor (ECF) transporter complex composed of an ATP-binding protein (A component, CbiO), a transmembrane protein (T component, CbiQ) and 2 possible substrate-capture proteins (S components, CbiM and CbiN) of unknown stoichimetry.

The protein localises to the cell membrane. It participates in cofactor biosynthesis; adenosylcobalamin biosynthesis. In terms of biological role, part of the energy-coupling factor (ECF) transporter complex CbiMNOQ involved in cobalt import. The polypeptide is Cobalt transport protein CbiM (Anoxybacillus flavithermus (strain DSM 21510 / WK1)).